The primary structure comprises 486 residues: Surface lipoprotein assembly modifier (486 aa).

Positions M1–A29 are cleaved as a signal peptide. The segment at K30–N197 is N-terminal domain. The interval Q198–F486 is C-terminal probable beta barrel. The next 14 membrane-spanning stretches (beta stranded) occupy residues W199–N209, G237–P248, F253–N262, T276–Q286, V290–K300, L320–L330, W334–E344, Y358–L367, F373–R382, K395–D404, I409–N419, Y437–R446, L453–K463, and N476–F486.

It belongs to the Slam family.

It is found in the cell outer membrane. Its function is as follows. Required for correct export to the cell surface of some cell outer membrane lipoproteins (tested with TpbP) upon heterologous expression in E.coli and probably also in Haemophilus. The sequence is that of Surface lipoprotein assembly modifier from Haemophilus influenzae (strain 86-028NP).